The primary structure comprises 440 residues: 2-methylisoborneol synthase (440 aa).

2 disordered regions span residues 1 to 33 (MPDS…IPSA) and 46 to 74 (LHPP…TVTG). Composition is skewed to pro residues over residues 9–29 (TPPP…PAPV) and 50–63 (VTVP…PPAP). The Mg(2+) site is built by D197, D198, E202, N345, S349, and E353.

It belongs to the terpene synthase family. 2-methylisoborneol synthase subfamily. It depends on Mg(2+) as a cofactor.

The enzyme catalyses (E)-2-methylgeranyl diphosphate + H2O = 2-methylisoborneol + diphosphate. Functionally, catalyzes the cyclization of 2-methylgeranyl diphosphate (2-MeGPP) to 2-methylisoborneol (2-MIB), which likely involves the intermediacy of 2-methyllinalyl diphosphate. Is also able to catalyze the cyclization of geranyl diphosphate (GPP), albeit with much lower efficiency, leading to the formation of a complex mixture of cyclic monoterpenes, consisting of alpha-pinene (6%), beta-pinene (23%), limonene (32%), gamma-terpinene (29%), and delta-terpinene (10%). This Streptomyces coelicolor (strain ATCC BAA-471 / A3(2) / M145) protein is 2-methylisoborneol synthase.